The following is a 306-amino-acid chain: Putative beta-lactamase HcpD (306 aa).

Positions 1–25 (MIKSWTKKWFLILFLMASCSSYLVA) are cleaved as a signal peptide. TPR repeat units follow at residues 28 to 61 (GEKY…RVGV), 96 to 133 (HLAC…KGGV), 168 to 205 (GISC…KDGA), and 240 to 277 (GSGC…GFSG). 7 disulfides stabilise this stretch: C55–C63, C91–C99, C127–C135, C163–C171, C199–C207, C235–C243, and C271–C279.

It belongs to the hcp beta-lactamase family.

It is found in the secreted. The enzyme catalyses a beta-lactam + H2O = a substituted beta-amino acid. In terms of biological role, may hydrolyze 6-aminopenicillinic acid and 7-aminocephalosporanic acid (ACA) derivatives. Binds to penicillin. The chain is Putative beta-lactamase HcpD (hcpD) from Helicobacter pylori (strain ATCC 700392 / 26695) (Campylobacter pylori).